The chain runs to 214 residues: Small ribosomal subunit protein uS3c (214 aa).

A KH type-2 domain is found at 39-111; it reads IRTYLNKLAK…QITINVVEVE (73 aa).

This sequence belongs to the universal ribosomal protein uS3 family. As to quaternary structure, part of the 30S ribosomal subunit.

The protein localises to the plastid. The protein resides in the chloroplast. The sequence is that of Small ribosomal subunit protein uS3c (rps3) from Thalassiosira pseudonana (Marine diatom).